A 478-amino-acid polypeptide reads, in one-letter code: NADH-ubiquinone oxidoreductase 49 kDa subunit, mitochondrial (478 aa).

The N-terminal 42 residues, 1–42 (MATTLFRLAGRNAKRHCMRQSTTIAHNLNSTRAFSASALRRY), are a transit peptide targeting the mitochondrion. Residues Cys341, Cys347, and Cys362 each coordinate [4Fe-4S] cluster.

This sequence belongs to the complex I 49 kDa subunit family. In terms of assembly, complex I is composed of about 40 different subunits. It depends on [4Fe-4S] cluster as a cofactor.

Its subcellular location is the mitochondrion inner membrane. The catalysed reaction is a ubiquinone + NADH + 5 H(+)(in) = a ubiquinol + NAD(+) + 4 H(+)(out). Its function is as follows. Core subunit of the mitochondrial membrane respiratory chain NADH dehydrogenase (Complex I) that is believed to belong to the minimal assembly required for catalysis. Complex I functions in the transfer of electrons from NADH to the respiratory chain. The immediate electron acceptor for the enzyme is believed to be ubiquinone. The chain is NADH-ubiquinone oxidoreductase 49 kDa subunit, mitochondrial (nuo-49) from Neurospora crassa (strain ATCC 24698 / 74-OR23-1A / CBS 708.71 / DSM 1257 / FGSC 987).